The primary structure comprises 673 residues: MSKDTEAKSEEIMESKVLWYPDSKRNTQTDRFRTLVNREFGLNLANYNDLYQWSVDSYPEFWAQVWKFCGITCSKMYEEVVDVSKRISDVPEWFKGSRLNYAENLLKHKDQDKVALYAASEAKEEIVKVTFGELRRDVALFAAAMRKMGIKIGDRVVGYLPNGVHAVEAMLAAASIGAIWSSTSPDFGVNGVLDRISQIQPKLIFSVAAVVYNGKQHDHMEKLQNVVKGLPDLKKVVVIPYVRSRQETDLSKIPNSVFLEDFLATGKEGDQDPQLEFEQLPFSHPLFIMYSSGTTGAPKCMVHSAGGTLIQHLKEHILHGNMTFNDVIIYYTTTGWMMWNWLISSLAVGASVVLYDGSPLVPSANVLWDLVDRLGITIFGTGAKWLAVLEERDQKPASTHSLQTLHTLLSTGSPLKPQSYEYVYSCIKNNVLLGSISGGTDIISCFMGQNMTVPVYRGEIQARNLGMAVESWSCEGKPVWGESGELVCLKPIPCQPTHFWNDENGSKYHKAYFSTFPGVWAHGDYCKINPKTGGVVMLGRSDGTLNPNGVRFGSSEIYNIVEAFDEVSDSLCVPQYNSDGEERVILFLKMGPNKSFSQELVGKIRGAIRVALSARHVPALILETKDIPYTISGKKVEVAVKQVIAGKEVTQRGAFSNPDSLDLYKNLPELQNF.

The protein belongs to the ATP-dependent AMP-binding enzyme family.

The protein localises to the cytoplasm. It is found in the cytosol. The enzyme catalyses acetoacetate + ATP + CoA = acetoacetyl-CoA + AMP + diphosphate. Functionally, converts acetoacetate to acetoacetyl-CoA in the cytosol. Ketone body-utilizing enzyme, responsible for the synthesis of cholesterol and fatty acids. This is Acetoacetyl-CoA synthetase (aacs) from Danio rerio (Zebrafish).